Reading from the N-terminus, the 325-residue chain is Elongation factor P--(R)-beta-lysine ligase (325 aa).

76–78 (SPE) contributes to the substrate binding site. ATP-binding positions include 100-102 (RNE) and Asn109. Tyr118 is a binding site for substrate. 244 to 245 (EL) contacts ATP. Position 251 (Glu251) interacts with substrate. Gly300 serves as a coordination point for ATP.

The protein belongs to the class-II aminoacyl-tRNA synthetase family. EpmA subfamily. In terms of assembly, homodimer.

It catalyses the reaction D-beta-lysine + L-lysyl-[protein] + ATP = N(6)-((3R)-3,6-diaminohexanoyl)-L-lysyl-[protein] + AMP + diphosphate + H(+). With EpmB is involved in the beta-lysylation step of the post-translational modification of translation elongation factor P (EF-P) on 'Lys-34'. Catalyzes the ATP-dependent activation of (R)-beta-lysine produced by EpmB, forming a lysyl-adenylate, from which the beta-lysyl moiety is then transferred to the epsilon-amino group of EF-P 'Lys-34'. In Salmonella agona (strain SL483), this protein is Elongation factor P--(R)-beta-lysine ligase.